Here is a 276-residue protein sequence, read N- to C-terminus: Putative pyruvate, phosphate dikinase regulatory protein (276 aa).

Residue 151 to 158 coordinates ADP; that stretch reads GISRTSKT.

The protein belongs to the pyruvate, phosphate/water dikinase regulatory protein family. PDRP subfamily.

It catalyses the reaction N(tele)-phospho-L-histidyl/L-threonyl-[pyruvate, phosphate dikinase] + ADP = N(tele)-phospho-L-histidyl/O-phospho-L-threonyl-[pyruvate, phosphate dikinase] + AMP + H(+). It carries out the reaction N(tele)-phospho-L-histidyl/O-phospho-L-threonyl-[pyruvate, phosphate dikinase] + phosphate + H(+) = N(tele)-phospho-L-histidyl/L-threonyl-[pyruvate, phosphate dikinase] + diphosphate. Its function is as follows. Bifunctional serine/threonine kinase and phosphorylase involved in the regulation of the pyruvate, phosphate dikinase (PPDK) by catalyzing its phosphorylation/dephosphorylation. This Streptococcus agalactiae serotype Ia (strain ATCC 27591 / A909 / CDC SS700) protein is Putative pyruvate, phosphate dikinase regulatory protein.